Reading from the N-terminus, the 157-residue chain is Isotocin-neurophysin IT 1 (157 aa).

The signal sequence occupies residues 1 to 20; that stretch reads MFGTSVSALCLLFLLSVCTA. Cysteines 21 and 26 form a disulfide. Glycine amide is present on glycine 29. 7 disulfide bridges follow: cysteine 42–cysteine 86, cysteine 45–cysteine 59, cysteine 53–cysteine 76, cysteine 60–cysteine 66, cysteine 93–cysteine 106, cysteine 100–cysteine 118, and cysteine 107–cysteine 112.

It belongs to the vasopressin/oxytocin family. Seven disulfide bonds are present in neurophysin.

It localises to the secreted. Functionally, isotocin causes contraction of smooth muscles. This is Isotocin-neurophysin IT 1 from Oncorhynchus keta (Chum salmon).